The following is a 452-amino-acid chain: MNSGILQVFQGELICPLCMNYFIDPVTIDCGHSFCRPCFYLNWQDIPFLVQCSECTKSTEQINLKTNIHLKKMASLARKVSLWLFLSSEEQMCGTHRETKKIFCEVDRSLLCLLCSSSQEHRYHRHRPIEWAAEEHREKLLQKMQSLWEKACENHRNLNVETTRTRCWKDYVNLRLEAIRAEYQKMPAFHHEEEKHNLEMLKKKGKEIFHRLHLSKAKMAHRMEILRGMYEELNEMCHKPDVELLQAFGDILHRSESVLLHMPQPLNPELSAGPITGLRDRLNQFRVHITLHHEEANNDIFLYEILRSMCIGCDHQDVPYFTATPRSFLAWGVQTFTSGKYYWEVHVGDSWNWAFGVCNMYRKEKNQNEKIDGKAGLFLLGCVKNDIQCSLFTTSPLMLQYIPKPTSRVGLFLDCEAKTVSFVDVNQSSLIYTIPNCSFSPPLRPIFCCIHF.

The RING-type zinc-finger motif lies at 15–56 (CPLCMNYFIDPVTIDCGHSFCRPCFYLNWQDIPFLVQCSECT). Residues 88 to 129 (SEEQMCGTHRETKKIFCEVDRSLLCLLCSSSQEHRYHRHRPI) form a B box-type zinc finger. Zn(2+)-binding residues include cysteine 93, histidine 96, cysteine 115, and histidine 121. One can recognise a B30.2/SPRY domain in the interval 269–452 (ELSAGPITGL…LRPIFCCIHF (184 aa)).

It belongs to the TRIM/RBCC family. As to expression, preferentially expressed in testis.

The sequence is that of Tripartite motif-containing protein 49 (TRIM49) from Homo sapiens (Human).